We begin with the raw amino-acid sequence, 634 residues long: DNA-directed RNA polymerase subunit gamma (634 aa).

Zn(2+) is bound by residues cysteine 74, cysteine 76, cysteine 89, and cysteine 92. Mg(2+) contacts are provided by aspartate 471, aspartate 473, and aspartate 475.

Belongs to the RNA polymerase beta' chain family. RpoC1 subfamily. In cyanobacteria the RNAP catalytic core is composed of 2 alpha, 1 beta, 1 beta', 1 gamma and 1 omega subunit. When a sigma factor is associated with the core the holoenzyme is formed, which can initiate transcription. Mg(2+) is required as a cofactor. It depends on Zn(2+) as a cofactor.

The enzyme catalyses RNA(n) + a ribonucleoside 5'-triphosphate = RNA(n+1) + diphosphate. Functionally, DNA-dependent RNA polymerase catalyzes the transcription of DNA into RNA using the four ribonucleoside triphosphates as substrates. This is DNA-directed RNA polymerase subunit gamma from Synechococcus sp. (strain WH7803).